The following is a 407-amino-acid chain: Myeloid cell nuclear differentiation antigen (407 aa).

The Pyrin domain maps to M1–K88. Residues E108 to P207 are disordered. Residues P131 to K137 carry the Nuclear localization signal motif. Positions P139–R148 are enriched in basic and acidic residues. A compositionally biased stretch (low complexity) spans Q177–P190. One can recognise an HIN-200 domain in the interval A196–I394.

Participates in a ternary complex with YY1 and the YY1 target DNA element. Binds nucleolin and nucleophosmin/NPM/B23. In terms of tissue distribution, expressed constitutively in cells of the myeloid lineage. Found in promyelocyte stage cells as well as in all other stage cells including peripheral blood monocytes and granulocytes. Also appears in myeloblast cells in some cases of acute myeloid Leukemia.

The protein resides in the nucleus. It localises to the cytoplasm. Its function is as follows. May act as a transcriptional activator/repressor in the myeloid lineage. Plays a role in the granulocyte/monocyte cell-specific response to interferon. Stimulates the DNA binding of the transcriptional repressor protein YY1. The protein is Myeloid cell nuclear differentiation antigen (MNDA) of Homo sapiens (Human).